Reading from the N-terminus, the 251-residue chain is Hydroxyacylglutathione hydrolase (251 aa).

Residues His53, His55, Asp57, His58, His110, Asp127, and His165 each contribute to the Zn(2+) site.

Belongs to the metallo-beta-lactamase superfamily. Glyoxalase II family. As to quaternary structure, monomer. It depends on Zn(2+) as a cofactor.

It carries out the reaction an S-(2-hydroxyacyl)glutathione + H2O = a 2-hydroxy carboxylate + glutathione + H(+). Its pathway is secondary metabolite metabolism; methylglyoxal degradation; (R)-lactate from methylglyoxal: step 2/2. In terms of biological role, thiolesterase that catalyzes the hydrolysis of S-D-lactoyl-glutathione to form glutathione and D-lactic acid. In Escherichia coli (strain UTI89 / UPEC), this protein is Hydroxyacylglutathione hydrolase.